The following is a 232-amino-acid chain: Mitochondrial import inner membrane translocase subunit Tim21 (232 aa).

The transit peptide at 1-31 directs the protein to the mitochondrion; that stretch reads MLPRFLWRPVLCSYRALGSPSRSLTVSYRNL. A helical membrane pass occupies residues 96–116; it reads FTYFIVVLIGIGVTGGLFYVV.

This sequence belongs to the TIM21 family.

Its subcellular location is the mitochondrion membrane. May participate in the translocation of transit peptide-containing proteins across the mitochondrial inner membrane. This is Mitochondrial import inner membrane translocase subunit Tim21 (timm21) from Xenopus laevis (African clawed frog).